Consider the following 1074-residue polypeptide: Transmembrane protein 132E (1074 aa).

The signal sequence occupies residues 1–23 (MAPGMSGRRGAALLCLSVLLAHA). The Extracellular portion of the chain corresponds to 26 to 894 (RSHPASPSPP…LTDLEIGMYA (869 aa)). N-linked (GlcNAc...) asparagine glycans are attached at residues asparagine 70 and asparagine 91. Disordered stretches follow at residues 205–224 (PAAP…PEAA) and 243–266 (GGCG…ESPT). Positions 247 to 262 (SARRGPGPGPGAAARA) are enriched in low complexity. N-linked (GlcNAc...) asparagine glycosylation is found at asparagine 320 and asparagine 401. Disordered stretches follow at residues 564 to 587 (RRSA…ANRG) and 816 to 867 (GRDE…PVPP). A compositionally biased stretch (low complexity) spans 843–854 (GAGPPGTAIPAG). Residues 895-915 (LLGVFCLAILVFLINCIVFVL) form a helical membrane-spanning segment. Residues 916–1074 (RYRHKRIPPE…NYMRRIKDIA (159 aa)) are Cytoplasmic-facing. The segment at 962–1064 (VPACCHGDHH…TRPTPPPDLH (103 aa)) is disordered. 2 stretches are compositionally biased toward low complexity: residues 973–985 (SGSS…SQVH) and 1016–1026 (FTTFTTLPTEE). The segment covering 1035–1044 (GEEEDEEEDL) has biased composition (acidic residues).

It belongs to the TMEM132 family. In terms of tissue distribution, widely expressed, with highest levels in the cochlea. In the cochlea, detected in spiral ganglion, the organ of Corti and stria vascularis. In the organ of Corti, prominently expressed in the outer and inner hair cells, especially at the apical and basal region of the outer hair cell body (at protein level).

The protein localises to the membrane. Its function is as follows. Required for normal inner ear hair cell function and hearing. The chain is Transmembrane protein 132E (Tmem132e) from Mus musculus (Mouse).